The following is a 1048-amino-acid chain: FHIP family protein GJ17503 (1048 aa).

Over residues 1 to 15 (MSWLRTSPLRQSLTR) the composition is skewed to polar residues. The tract at residues 1–32 (MSWLRTSPLRQSLTRNSGSSGSGNSSATTTLR) is disordered. Low complexity predominate over residues 16 to 26 (NSGSSGSGNSS). Serine 500 is subject to Phosphoserine. 3 disordered regions span residues 652–675 (TTTA…GRRD), 813–871 (APMH…KRRS), and 924–984 (ARGA…ESGL). The segment covering 816 to 838 (HQQHQQQQLQHTTNPTQQQQAQQ) has biased composition (low complexity). 2 stretches are compositionally biased toward polar residues: residues 839 to 857 (RSTY…SPTS) and 929 to 954 (QEQS…TAVV). The segment covering 955-978 (SSSNSSIGGSTQTLSATHSSSTLH) has biased composition (low complexity).

Belongs to the FHIP family.

The polypeptide is FHIP family protein GJ17503 (Drosophila virilis (Fruit fly)).